A 197-amino-acid polypeptide reads, in one-letter code: MENVKEDRTLDLSGLSCPLPVVMTSETMRKMEEGQVLKVISTDPGFERDIWSWAKQSGNILLKVEKEDGKTIAYIKKASEAHEPSLWYWIKFHSLGVKLHIRQFCIQINPFVKKPTHFITFSAISEGTRAEKELKKLGEKDAVLIPIPDEIDPRCGVVLAVHGEKKAREIYEKLKDMDIAVEAIYEKKGKEYERVYP.

Catalysis depends on Cys17, which acts as the Cysteine persulfide intermediate.

Belongs to the sulfur carrier protein TusA family.

This is Putative sulfur carrier protein aq_1421 from Aquifex aeolicus (strain VF5).